Here is a 238-residue protein sequence, read N- to C-terminus: Mannose-binding protein A (238 aa).

An N-terminal signal peptide occupies residues 1–17; sequence MLLLPLLVLLCVVSVSS. Residues 38–49 are compositionally biased toward basic and acidic residues; the sequence is DGRDGPKGEKGE. Residues 38 to 87 form a disordered region; sequence DGRDGPKGEKGEPGQGLRGLQGPPGKLGPPGSVGAPGSQGPKGQKGDRGD. In terms of domain architecture, Collagen-like spans 39–88; that stretch reads GRDGPKGEKGEPGQGLRGLQGPPGKLGPPGSVGAPGSQGPKGQKGDRGDS. The residue at position 43 (proline 43) is a 4-hydroxyproline. A 5-hydroxylysine mark is found at lysine 44 and lysine 47. 2 O-linked (Gal...) hydroxylysine glycosylation sites follow: lysine 44 and lysine 47. Proline 50, proline 61, proline 67, proline 73, and proline 78 each carry 4-hydroxyproline. 5-hydroxylysine occurs at positions 79 and 82. O-linked (Gal...) hydroxylysine glycans are attached at residues lysine 79 and lysine 82. One can recognise a C-type lectin domain in the interval 143–238; it reads ALCSELRGTV…SHTAVCEFPA (96 aa). Cystine bridges form between cysteine 145-cysteine 234 and cysteine 212-cysteine 226. 9 residues coordinate Ca(2+): aspartate 178, glutamate 182, glutamate 202, asparagine 204, aspartate 205, glutamate 210, aspartate 211, asparagine 222, and aspartate 223. The tract at residues 202-210 is calcium-dependent carbohydrate binding; that stretch reads EPNDHGSGE.

As to quaternary structure, homotrimer. Forms higher oligomeric complexes formed by the association of two, three or more homotrimers. Oligomerization occurs in the endoplasmic reticulum. Interacts with MASP1 and MASP2. In terms of processing, hydroxylated on lysine and proline residues within the collagen-like domain. O-glycosylated. O-linked glycans on hydroxylysine residues consist of Glc-Gal disaccharides bound to the oxygen atom of post-translationally added hydroxyl groups. As to expression, detected in blood serum (at protein level).

The protein localises to the secreted. Functionally, calcium-dependent lectin. Plays a role in the innate immune response by binding mannose, fucose and N-acetylglucosamine moieties on different microorganisms and mediating activation of the lectin complement pathway. Binds to late apoptotic cells, as well as to apoptotic blebs and to necrotic cells, but not to early apoptotic cells, facilitating their uptake by macrophages. The polypeptide is Mannose-binding protein A (Mbl1) (Rattus norvegicus (Rat)).